The chain runs to 294 residues: Large ribosomal subunit protein uL4m (294 aa).

The tract at residues 119–139 (EVSGGGRKPWQQKGSGRARHG) is disordered. Arg147 is subject to Omega-N-methylarginine.

It belongs to the universal ribosomal protein uL4 family. As to quaternary structure, component of the mitochondrial ribosome large subunit (39S) which comprises a 16S rRNA and about 50 distinct proteins. Interacts with MIEF1 upstream open reading frame protein.

The protein resides in the mitochondrion. This Mus musculus (Mouse) protein is Large ribosomal subunit protein uL4m (Mrpl4).